The primary structure comprises 214 residues: EEF1A lysine methyltransferase 1 (214 aa).

The residue at position 2 (Ser-2) is an N-acetylserine. Ser-2 carries the post-translational modification Phosphoserine.

Belongs to the class I-like SAM-binding methyltransferase superfamily. EFM5 family.

The protein resides in the cytoplasm. It carries out the reaction L-lysyl-[protein] + 3 S-adenosyl-L-methionine = N(6),N(6),N(6)-trimethyl-L-lysyl-[protein] + 3 S-adenosyl-L-homocysteine + 3 H(+). Its function is as follows. Protein N-lysine methyltransferase that selectively catalyzes the trimethylation of EEF1A at 'Lys-79'. This is EEF1A lysine methyltransferase 1 from Homo sapiens (Human).